We begin with the raw amino-acid sequence, 183 residues long: Globin-like protein 26 (183 aa).

Residues 1-25 form a disordered region; it reads MGSSTSTPAPPPKKNKPEGRKADNQ. Residue Gly2 is the site of N-myristoyl glycine attachment. Residues 12–18 carry the Nuclear localization signal motif; that stretch reads PKKNKPE. Residues 26 to 166 form the Globin domain; the sequence is ILNSYQKSIV…VVDQLRFGYS (141 aa). The heme site is built by His77 and His109.

It belongs to the globin family. Homodimer. Occurs in an equilibrium of monomeric and dimeric forms in solution. Detected in the head mesodermal cell. In the tail region, detected in the stomatointestinal and anal depressor muscle cells.

The protein localises to the cytoplasm. It is found in the nucleus lamina. The protein resides in the cell membrane. Functionally, plays a role in electron transport. Utilizes the bis-histidyl hexacoordinated complex with iron to transfer electrons to cytochrome c and molecular oxygen. Plays a regulatory role in the periodicity of the defecation cycle under oxidative stress conditions. Not involved in imparting protection against general conditions of oxidative stress. May participate in redox reactions under anaerobic conditions. The polypeptide is Globin-like protein 26 (Caenorhabditis elegans).